We begin with the raw amino-acid sequence, 3856 residues long: Serine/threonine-protein kinase ATM (3856 aa).

Positions 108–162 (VGNLVWVMTKYKKWWPGEVVDFKADAKESFMVRSIGQSHLVSWFASSKLKPFKES) constitute a PWWP domain. Residues 648-681 (GIPDLNGTNTEPTLVLPQVEPTQRRRRRKKEESP) are disordered. The 667-residue stretch at 2727-3393 (VVAGSAVVCG…ILQLLALANG (667 aa)) folds into the FAT domain. A Bipartite nuclear localization signal motif is present at residues 3233–3249 (RKHKTKELEVFIKRFKS). The 313-residue stretch at 3499 to 3811 (LSDSVTVMNG…GNKDATRALM (313 aa)) folds into the PI3K/PI4K catalytic domain. Residues 3505–3511 (VMNGINA) form a G-loop region. Positions 3678–3686 (GLGDRHAMN) are catalytic loop. Residues 3698 to 3722 (HIDLGVAFEQGLMLKTPERVPFRLT) form an activation loop region. One can recognise an FATC domain in the interval 3824-3856 (EMRSIHGQAQQLIQDAIDTDRLSHMFPGWGAWM).

Belongs to the PI3/PI4-kinase family. Interacts with RUG3. Ubiquitously expressed at low levels with slightly higher levels in flower buds.

Its subcellular location is the nucleus. The catalysed reaction is L-seryl-[protein] + ATP = O-phospho-L-seryl-[protein] + ADP + H(+). It catalyses the reaction L-threonyl-[protein] + ATP = O-phospho-L-threonyl-[protein] + ADP + H(+). Serine/threonine protein kinase which activates checkpoint signaling upon genotoxic stresses such as ionizing radiation (IR) or DNA replication stalling. Plays a central role in the perception and response to both stress-induced damage in somatic cells and developmentally programmed DNA damage during meiosis. Recognizes the substrate consensus sequence [ST]-Q. Phosphorylates histone variant H2AX to form H2AXS139ph at double strand breaks (DSBs), thereby regulating DNA damage response mechanism. Involved in transcriptional regulation of RAD51, PARP1, GR1, and LIG4 in response to DNA double strand breaks. Plays a dual role by activating the DNA damage response at dysfunctional telomeres and yet preventing this activation at functional telomeres. Not required for telomere length homeostasis. Regulates DNA damage response (DDR) synergistically with RUG3. Together with RUG3, involved in the splicing of the ND2/NAD2 mRNA. The chain is Serine/threonine-protein kinase ATM from Arabidopsis thaliana (Mouse-ear cress).